Consider the following 277-residue polypeptide: MNTMNNMHLYADSLGIHPADHYPTMNEIETTDNTYPRYTSPPHPSILHHPQAPEPAPPRAQTAHPPAWALTSQSGYQMNEPSLSLTPEHRPAAGPPNGPNLNHDSDPRRPARRQQPCGVGTTRPLPGCPGQGQEPSRRRTTFTDSISNPDSTIRCWDHGCEGRKFSSVGNYRRHLREKNGQAKMHPCPDCGRVFTRSTARNFHRQSGTCGLIPSQLMLQMGMGMQLQVQMQPVSQHSLASGHPPAFNLAPPVLLEPLADWSEPSQMDLYAASGVVFD.

Disordered regions lie at residues 23–66 (PTMN…AHPP) and 78–146 (MNEP…TDSI). Positions 27–37 (EIETTDNTYPR) are enriched in polar residues. The segment at 185 to 208 (HPCPDCGRVFTRSTARNFHRQSGT) adopts a C2H2-type; degenerate zinc-finger fold.

The protein belongs to the GLI C2H2-type zinc-finger protein family.

It is found in the nucleus. C2H2-type zinc-finger transcription factor that controls the expression of the nonribosomal peptide synthases inpA and inpB, as well as of the other inp cluster-associated genes. Also mediates the expression of the asperfuranone biosynthesis gene cluster by binding to the afoA promoter. Probably recognizes the 5'-CT/C/AAAAGGAT/AT/GG/CA-3' motif in the promoters of teget genes. The polypeptide is C2H2-type zinc-finger transcription factor (Emericella nidulans (strain FGSC A4 / ATCC 38163 / CBS 112.46 / NRRL 194 / M139) (Aspergillus nidulans)).